The following is a 213-amino-acid chain: Probable 26S proteasome regulatory subunit p27 (213 aa).

Positions 1-82 (MDEFKQLDLK…IKKVLEKVFS (82 aa)) form a coiled coil. Positions 120–184 (SKILGRVKPF…TLDVLLIRGY (65 aa)) constitute a PDZ domain.

Its subcellular location is the cytoplasm. The protein resides in the nucleus. Its function is as follows. Acts as a chaperone during the assembly of the 26S proteasome, specifically of the base subcomplex of the 19S regulatory complex (RC). This chain is Probable 26S proteasome regulatory subunit p27 (nas2), found in Schizosaccharomyces pombe (strain 972 / ATCC 24843) (Fission yeast).